A 128-amino-acid polypeptide reads, in one-letter code: Flagellar basal body rod protein FlgB (128 aa).

The protein belongs to the flagella basal body rod proteins family. The basal body constitutes a major portion of the flagellar organelle and consists of a number of rings mounted on a central rod. In Gram-negative bacteria, at least four rings, L, P, S and M are present, whereas Gram-positive bacteria lack the L and P rings. The rod consists of about 26 subunits of FlgG in the distal portion, and FlgB, FlgC and FlgF build up the proximal portion of the rod with about 6 subunits each. Rod assembly occurs by export via the flagellum-specific pathway of its constituent proteins and by their incorporation into the rod structure in the probable order of FlgB, FlgC, FlgF and FlgG. Another protein, FliE, also assembles onto the stable rod structure.

The protein resides in the bacterial flagellum basal body. In terms of biological role, structural component of flagellum, the bacterial motility apparatus. Part of the rod structure of flagellar basal body. In Cereibacter sphaeroides (strain ATCC 17029 / ATH 2.4.9) (Rhodobacter sphaeroides), this protein is Flagellar basal body rod protein FlgB.